We begin with the raw amino-acid sequence, 396 residues long: Tryptophan synthase beta chain (396 aa).

Position 86 is an N6-(pyridoxal phosphate)lysine (K86).

This sequence belongs to the TrpB family. In terms of assembly, tetramer of two alpha and two beta chains. Pyridoxal 5'-phosphate is required as a cofactor.

The enzyme catalyses (1S,2R)-1-C-(indol-3-yl)glycerol 3-phosphate + L-serine = D-glyceraldehyde 3-phosphate + L-tryptophan + H2O. It functions in the pathway amino-acid biosynthesis; L-tryptophan biosynthesis; L-tryptophan from chorismate: step 5/5. Its function is as follows. The beta subunit is responsible for the synthesis of L-tryptophan from indole and L-serine. This chain is Tryptophan synthase beta chain, found in Photobacterium profundum (strain SS9).